Here is a 203-residue protein sequence, read N- to C-terminus: Sarcosine oxidase subunit gamma (203 aa).

Belongs to the SoxG family. Heterotetramer composed of subunits alpha (SoxA), beta (SoxB), gamma (SoxG) and delta (SoxD).

The protein resides in the cytoplasm. It carries out the reaction sarcosine + (6S)-5,6,7,8-tetrahydrofolate + O2 = (6R)-5,10-methylene-5,6,7,8-tetrahydrofolate + glycine + H2O2. It catalyses the reaction sarcosine + O2 + H2O = formaldehyde + glycine + H2O2. In terms of biological role, in the presence of tetrahydrofolate, catalyzes the oxidative demethylation of sarcosine to yield glycine, 5,10-methylenetetrahydrofolate and hydrogen peroxide. In the absence of tetrahydrofolate, catalyzes the oxidative demethylation of sarcosine to yield glycine, formaldehyde and hydrogen peroxide. This chain is Sarcosine oxidase subunit gamma, found in Corynebacterium sp. (strain P-1).